Reading from the N-terminus, the 78-residue chain is Acyl carrier protein (78 aa).

Residues 2–77 (SDIADRVKKI…DAIKFLEKNS (76 aa)) enclose the Carrier domain. S37 carries the post-translational modification O-(pantetheine 4'-phosphoryl)serine.

The protein belongs to the acyl carrier protein (ACP) family. In terms of processing, 4'-phosphopantetheine is transferred from CoA to a specific serine of apo-ACP by AcpS. This modification is essential for activity because fatty acids are bound in thioester linkage to the sulfhydryl of the prosthetic group.

The protein resides in the cytoplasm. It functions in the pathway lipid metabolism; fatty acid biosynthesis. In terms of biological role, carrier of the growing fatty acid chain in fatty acid biosynthesis. The polypeptide is Acyl carrier protein (Methylobacterium sp. (strain 4-46)).